Reading from the N-terminus, the 296-residue chain is Stanniocalcin-2 (296 aa).

A signal peptide spans 1-24; it reads MCAERLGQFVTLALVFATLDPAQG. Positions 21 to 44 are disordered; the sequence is PAQGTDSTNPPEGPQDRSSQQKGR. Over residues 24–44 the composition is skewed to polar residues; that stretch reads GTDSTNPPEGPQDRSSQQKGR. The N-linked (GlcNAc...) asparagine glycan is linked to Asn73. Residues 218-296 form a disordered region; that stretch reads PPTAAPEHQP…EQSEYSDIRR (79 aa). Residues 240–258 are compositionally biased toward basic and acidic residues; sequence RDTDHHLTANRGAKGERGS. Residues 272–282 are compositionally biased toward low complexity; it reads GQSAQGPSGSS.

The protein belongs to the stanniocalcin family. Homodimer; disulfide-linked. Found in a variety of tissues including skeletal muscle, small intestine, kidney, liver and brain.

Its subcellular location is the secreted. Its function is as follows. Has an anti-hypocalcemic action on calcium and phosphate homeostasis. This is Stanniocalcin-2 (Stc2) from Mus musculus (Mouse).